Reading from the N-terminus, the 63-residue chain is MSRRDDLTGKGPMFGNNRSHALNATRRRFNLNLQKVSVVVNGRKVNLKVSAKTAKTLRRKNLI.

The interval 1-21 (MSRRDDLTGKGPMFGNNRSHA) is disordered.

This sequence belongs to the bacterial ribosomal protein bL28 family.

This is Large ribosomal subunit protein bL28 from Mycoplasmopsis pulmonis (strain UAB CTIP) (Mycoplasma pulmonis).